We begin with the raw amino-acid sequence, 505 residues long: Monocarboxylate transporter 10 (505 aa).

Residues 1 to 14 (MTEPEPTLEQEPTP) show a composition bias toward acidic residues. The tract at residues 1-64 (MTEPEPTLEQ…EQKSPEEFEP (64 aa)) is disordered. The Cytoplasmic segment spans residues 1–66 (MTEPEPTLEQ…KSPEEFEPPE (66 aa)). Residues 15–31 (EPEPTQEPTPEPTPEPE) are compositionally biased toward pro residues. The span at 32-41 (PTQEPESEPE) shows a compositional bias: acidic residues. A helical transmembrane segment spans residues 67-87 (GGWGWVVMLASMWCNGSVFGI). Residues 88 to 114 (QNAFGIMFVYLLNEFGSEHDADLRFKT) lie on the Extracellular side of the membrane. The helical transmembrane segment at 115–135 (AWVGSLSMGMIFFCSPIVSVF) threads the bilayer. The Cytoplasmic segment spans residues 136–142 (TDLLGCR). A helical transmembrane segment spans residues 143–163 (ITAVGGAAVGCVGLLASSFVT). Residues 164–171 (SLGPMYFT) lie on the Extracellular side of the membrane. Residues 172-192 (YGIVFACGCSFAYQPSLVILG) form a helical membrane-spanning segment. At 193–204 (HYFKRRLGLVNG) the chain is on the cytoplasmic side. Residues 205–225 (IVTAGSSVFTITLPYMLSGLL) traverse the membrane as a helical segment. Residues 226–235 (KSVGLYHTLR) lie on the Extracellular side of the membrane. The chain crosses the membrane as a helical span at residues 236-256 (VLAIFMFILMLAGLTYKPLLP). The Cytoplasmic portion of the chain corresponds to 257 to 286 (KPVSSSKPGSRCPPLSRIFNVNIWKSLGYR). Residues 287–307 (IWAFGIPAALYGYFVPYVHLM) form a helical membrane-spanning segment. Topologically, residues 308–321 (THVEERFGPEANKE) are extracellular. The chain crosses the membrane as a helical span at residues 322–342 (VLLACIGITSGVGRLIFGRVA). Asp-343 is a topological domain (cytoplasmic). The helical transmembrane segment at 344-364 (YVPGVNKVFLQVSSFMVIGVM) threads the bilayer. Residues 365–377 (SMMIPLCHVFGGL) lie on the Extracellular side of the membrane. The helical transmembrane segment at 378–400 (IAVCLLMGLFDGCFICIMAPIAF) threads the bilayer. The Cytoplasmic segment spans residues 401-411 (ELVGSQNVSQA). Residues 412-432 (IGFLLGMMSIPMTVGPPIAGF) form a helical membrane-spanning segment. Topologically, residues 433-443 (LRDRLGSYDVA) are extracellular. A helical membrane pass occupies residues 444–464 (FYLAGIPPLIGGAVLCAIPWV). Topologically, residues 465 to 505 (EARRKRREAANTAENTEKMLESRSPPLEDTVCRTEEPESVI) are cytoplasmic. The tract at residues 474 to 505 (ANTAENTEKMLESRSPPLEDTVCRTEEPESVI) is disordered. Residues 494-505 (TVCRTEEPESVI) are compositionally biased toward basic and acidic residues.

It belongs to the major facilitator superfamily. Monocarboxylate porter (TC 2.A.1.13) family.

The protein localises to the cell membrane. It localises to the basolateral cell membrane. The enzyme catalyses L-tryptophan(in) = L-tryptophan(out). It carries out the reaction L-tyrosine(in) = L-tyrosine(out). The catalysed reaction is L-phenylalanine(in) = L-phenylalanine(out). It catalyses the reaction 3,3',5-triiodo-L-thyronine(out) = 3,3',5-triiodo-L-thyronine(in). The enzyme catalyses L-thyroxine(out) = L-thyroxine(in). Functionally, sodium- and proton-independent thyroid hormones and aromatic acids transporter. Mediates both uptake and efflux of 3,5,3'-triiodothyronine (T3) and 3,5,3',5'-tetraiodothyronine (T4) with high affinity, suggesting a role in the homeostasis of thyroid hormone levels. Responsible for low affinity bidirectional transport of the aromatic amino acids, such as phenylalanine, tyrosine, tryptophan and L-3,4-dihydroxyphenylalanine (L-dopa). Plays an important role in homeostasis of aromatic amino acids. This is Monocarboxylate transporter 10 (slc16a10) from Danio rerio (Zebrafish).